A 213-amino-acid chain; its full sequence is ATP synthase subunit delta 2 (213 aa).

It belongs to the ATPase delta chain family. F-type ATPases have 2 components, F(1) - the catalytic core - and F(0) - the membrane proton channel. F(1) has five subunits: alpha(3), beta(3), gamma(1), delta(1), epsilon(1). F(0) has three main subunits: a(1), b(2) and c(10-14). The alpha and beta chains form an alternating ring which encloses part of the gamma chain. F(1) is attached to F(0) by a central stalk formed by the gamma and epsilon chains, while a peripheral stalk is formed by the delta and b chains.

The protein localises to the cell inner membrane. Functionally, f(1)F(0) ATP synthase produces ATP from ADP in the presence of a proton or sodium gradient. F-type ATPases consist of two structural domains, F(1) containing the extramembraneous catalytic core and F(0) containing the membrane proton channel, linked together by a central stalk and a peripheral stalk. During catalysis, ATP synthesis in the catalytic domain of F(1) is coupled via a rotary mechanism of the central stalk subunits to proton translocation. Its function is as follows. This protein is part of the stalk that links CF(0) to CF(1). It either transmits conformational changes from CF(0) to CF(1) or is implicated in proton conduction. In Brachyspira hyodysenteriae (strain ATCC 49526 / WA1), this protein is ATP synthase subunit delta 2.